Reading from the N-terminus, the 864-residue chain is Leucine--tRNA ligase (864 aa).

Residues 42-52 carry the 'HIGH' region motif; it reads PYPSGKLHMGH. The 'KMSKS' region motif lies at 624–628; the sequence is KMSKS. Position 627 (Lys-627) interacts with ATP.

This sequence belongs to the class-I aminoacyl-tRNA synthetase family.

It is found in the cytoplasm. The enzyme catalyses tRNA(Leu) + L-leucine + ATP = L-leucyl-tRNA(Leu) + AMP + diphosphate. The chain is Leucine--tRNA ligase from Burkholderia mallei (strain ATCC 23344).